Consider the following 25-residue polypeptide: Ribosome-inactivating protein charantin (25 aa).

Monomer.

The catalysed reaction is Endohydrolysis of the N-glycosidic bond at one specific adenosine on the 28S rRNA.. Its function is as follows. Inhibits cell-free translation in a rabbit reticulocyte lysate system. This is Ribosome-inactivating protein charantin from Momordica charantia (Bitter gourd).